The chain runs to 194 residues: MSKLVLASASPRRRELLARLGLPFTIQPSRIDESVYRHLPPAARVEALALAKARAVAAGLTDALVLGADTLVVCEGRVLGKPDSPAAAARMLAFLSGRTHTVYTGVAVVQAPRGPEGVTHARTAVTFRHLTPDQIEAYVATGEPLDKAGAYGIQGRGALLVAGIEGDYFNVVGLPLVQVEELLAIFGVDVWGRV.

Residue Asp-69 is the Proton acceptor of the active site.

It belongs to the Maf family. YhdE subfamily. The cofactor is a divalent metal cation.

It is found in the cytoplasm. The catalysed reaction is dTTP + H2O = dTMP + diphosphate + H(+). The enzyme catalyses UTP + H2O = UMP + diphosphate + H(+). Its function is as follows. Nucleoside triphosphate pyrophosphatase that hydrolyzes dTTP and UTP. May have a dual role in cell division arrest and in preventing the incorporation of modified nucleotides into cellular nucleic acids. The chain is dTTP/UTP pyrophosphatase from Moorella thermoacetica (strain ATCC 39073 / JCM 9320).